The chain runs to 182 residues: Crossover junction endodeoxyribonuclease RuvC (182 aa).

Catalysis depends on residues Asp7, Glu69, and Asp141. 3 residues coordinate Mg(2+): Asp7, Glu69, and Asp141.

This sequence belongs to the RuvC family. Homodimer which binds Holliday junction (HJ) DNA. The HJ becomes 2-fold symmetrical on binding to RuvC with unstacked arms; it has a different conformation from HJ DNA in complex with RuvA. In the full resolvosome a probable DNA-RuvA(4)-RuvB(12)-RuvC(2) complex forms which resolves the HJ. It depends on Mg(2+) as a cofactor.

Its subcellular location is the cytoplasm. The enzyme catalyses Endonucleolytic cleavage at a junction such as a reciprocal single-stranded crossover between two homologous DNA duplexes (Holliday junction).. Its function is as follows. The RuvA-RuvB-RuvC complex processes Holliday junction (HJ) DNA during genetic recombination and DNA repair. Endonuclease that resolves HJ intermediates. Cleaves cruciform DNA by making single-stranded nicks across the HJ at symmetrical positions within the homologous arms, yielding a 5'-phosphate and a 3'-hydroxyl group; requires a central core of homology in the junction. The consensus cleavage sequence is 5'-(A/T)TT(C/G)-3'. Cleavage occurs on the 3'-side of the TT dinucleotide at the point of strand exchange. HJ branch migration catalyzed by RuvA-RuvB allows RuvC to scan DNA until it finds its consensus sequence, where it cleaves and resolves the cruciform DNA. The polypeptide is Crossover junction endodeoxyribonuclease RuvC (Paracidovorax citrulli (strain AAC00-1) (Acidovorax citrulli)).